The chain runs to 192 residues: Lipid A acyltransferase PagP (192 aa).

Positions 1-24 (MWLRFCAPALMAWYWVFFPSTSQA) are cleaved as a signal peptide. Active-site residues include histidine 63, aspartate 106, and serine 107.

The protein belongs to the lipid A palmitoyltransferase family. Homodimer.

The protein localises to the cell outer membrane. It carries out the reaction a lipid A + a 1,2-diacyl-sn-glycero-3-phosphocholine = a hepta-acyl lipid A + a 2-acyl-sn-glycero-3-phosphocholine. The catalysed reaction is a lipid IVA + a 1,2-diacyl-sn-glycero-3-phosphocholine = a lipid IVB + a 2-acyl-sn-glycero-3-phosphocholine. The enzyme catalyses a lipid IIA + a 1,2-diacyl-sn-glycero-3-phosphocholine = a lipid IIB + a 2-acyl-sn-glycero-3-phosphocholine. Functionally, transfers a fatty acid residue from the sn-1 position of a phospholipid to the N-linked hydroxyfatty acid chain on the proximal unit of lipid A or its precursors. This chain is Lipid A acyltransferase PagP, found in Musicola paradisiaca (strain Ech703) (Dickeya paradisiaca).